We begin with the raw amino-acid sequence, 208 residues long: Uracil phosphoribosyltransferase (208 aa).

5-phospho-alpha-D-ribose 1-diphosphate contacts are provided by residues R78, R103, and 130–138 (DPMLATGGS). Residues I193 and 198 to 200 (GDA) each bind uracil. Residue D199 coordinates 5-phospho-alpha-D-ribose 1-diphosphate.

Belongs to the UPRTase family. Requires Mg(2+) as cofactor.

It catalyses the reaction UMP + diphosphate = 5-phospho-alpha-D-ribose 1-diphosphate + uracil. It functions in the pathway pyrimidine metabolism; UMP biosynthesis via salvage pathway; UMP from uracil: step 1/1. Its activity is regulated as follows. Allosterically activated by GTP. Catalyzes the conversion of uracil and 5-phospho-alpha-D-ribose 1-diphosphate (PRPP) to UMP and diphosphate. This is Uracil phosphoribosyltransferase from Blochmanniella pennsylvanica (strain BPEN).